Reading from the N-terminus, the 244-residue chain is Nodulation protein G (244 aa).

Position 11–35 (11–35) interacts with NAD(+); it reads VTGASGAIGGAIARVLHAQGAIVGL. S139 contributes to the substrate binding site. Y152 functions as the Proton acceptor in the catalytic mechanism.

Belongs to the short-chain dehydrogenases/reductases (SDR) family.

Functionally, proposed to modify Nod factor fatty acyl chain. The sequence is that of Nodulation protein G (nodG) from Rhizobium meliloti (Ensifer meliloti).